Reading from the N-terminus, the 319-residue chain is ATP-dependent 6-phosphofructokinase (319 aa).

Glycine 11 lines the ATP pocket. Residue 21-25 (RAVVR) coordinates ADP. Residues 72–73 (RC) and 102–105 (GEGS) contribute to the ATP site. Residue glutamate 103 coordinates Mg(2+). Residue 126 to 128 (TID) participates in substrate binding. Aspartate 128 functions as the Proton acceptor in the catalytic mechanism. Lysine 155 serves as a coordination point for ADP. Residues arginine 163 and 170–172 (MGR) contribute to the substrate site. ADP is bound by residues 186–188 (GAE), arginine 212, and 214–216 (KIN). Residues glutamate 223, arginine 244, and 250–253 (HVQR) contribute to the substrate site.

It belongs to the phosphofructokinase type A (PFKA) family. ATP-dependent PFK group I subfamily. Prokaryotic clade 'B1' sub-subfamily. As to quaternary structure, homotetramer. Mg(2+) is required as a cofactor.

It localises to the cytoplasm. The catalysed reaction is beta-D-fructose 6-phosphate + ATP = beta-D-fructose 1,6-bisphosphate + ADP + H(+). It participates in carbohydrate degradation; glycolysis; D-glyceraldehyde 3-phosphate and glycerone phosphate from D-glucose: step 3/4. Its activity is regulated as follows. Allosterically activated by ADP and other diphosphonucleosides, and allosterically inhibited by phosphoenolpyruvate. In terms of biological role, catalyzes the phosphorylation of D-fructose 6-phosphate to fructose 1,6-bisphosphate by ATP, the first committing step of glycolysis. This is ATP-dependent 6-phosphofructokinase from Thermotoga neapolitana (strain ATCC 49049 / DSM 4359 / NBRC 107923 / NS-E).